The primary structure comprises 595 residues: Cyclin-dependent kinase-like 3 (595 aa).

Residues tyrosine 4–phenylalanine 286 enclose the Protein kinase domain. ATP contacts are provided by residues valine 10–valine 18 and lysine 33. The [NKR]KIAxRE motif lies at lysine 45–isoleucine 51. The active-site Proton acceptor is aspartate 125. Threonine 158 carries the phosphothreonine modification. Tyrosine 160 is subject to Phosphotyrosine. Disordered regions lie at residues valine 362–glycine 427, serine 448–lysine 513, and arginine 551–leucine 586. The segment covering glycine 368–glutamine 386 has biased composition (basic and acidic residues). Over residues glutamine 387–serine 397 the composition is skewed to polar residues. Over residues serine 448–arginine 457 the composition is skewed to low complexity. Composition is skewed to polar residues over residues serine 468 to threonine 491 and arginine 499 to glycine 509. The span at asparagine 570 to asparagine 585 shows a compositional bias: basic and acidic residues.

Belongs to the protein kinase superfamily. CMGC Ser/Thr protein kinase family. CDC2/CDKX subfamily.

The protein localises to the cytoplasm. It catalyses the reaction L-seryl-[protein] + ATP = O-phospho-L-seryl-[protein] + ADP + H(+). The enzyme catalyses L-threonyl-[protein] + ATP = O-phospho-L-threonyl-[protein] + ADP + H(+). This Mus musculus (Mouse) protein is Cyclin-dependent kinase-like 3.